Here is a 193-residue protein sequence, read N- to C-terminus: CRIB domain-containing protein RIC5 (193 aa).

One can recognise a CRIB domain in the interval 29-42; sequence IGIPTDVKHVAHIG. The disordered stretch occupies residues 42-193; sequence GWEGPSATTP…CAGLGSSTGR (152 aa). The span at 55–67 shows a compositional bias: basic and acidic residues; the sequence is HDFKPTDQTKTET. The segment covering 90–100 has biased composition (polar residues); sequence STGNNSPTESP. Residues 123 to 134 are compositionally biased toward low complexity; the sequence is GSGSESGSGLEL.

As to quaternary structure, interacts with ARAC11/ROP1. As to expression, expressed in flowers and pollen.

Its subcellular location is the cell membrane. In terms of biological role, functions as a downstream effector of Rho-related GTP binding proteins of the 'Rho of Plants' (ROPs) family. Participates in the propagation of ROP GTPase signals in specific cellular responses. Is involved in pollen tube growth regulation through its interaction with ARAC11/ROP1. The chain is CRIB domain-containing protein RIC5 (RIC5) from Arabidopsis thaliana (Mouse-ear cress).